The primary structure comprises 433 residues: Isocitrate dehydrogenase [NADP], chloroplastic (433 aa).

The transit peptide at 1–21 (QFSPNLSFSAFFPIITFTTAT) directs the protein to the chloroplast. Residues 98–100 (TIT) and R105 contribute to the NADP(+) site. T100 contributes to the substrate binding site. Substrate is bound by residues 117–123 (SPNGTIR), R132, and R155. Residue D275 participates in Mn(2+) binding. Residue K283 participates in NADP(+) binding. D298 provides a ligand contact to Mn(2+). NADP(+)-binding positions include 333-338 (GTVTRH) and N351.

It belongs to the isocitrate and isopropylmalate dehydrogenases family. Mg(2+) serves as cofactor. It depends on Mn(2+) as a cofactor. As to expression, detected in all tissues examined.

The protein localises to the plastid. It localises to the chloroplast. The catalysed reaction is D-threo-isocitrate + NADP(+) = 2-oxoglutarate + CO2 + NADPH. This Medicago sativa (Alfalfa) protein is Isocitrate dehydrogenase [NADP], chloroplastic.